The sequence spans 429 residues: UPF0597 protein AHA_1619 (429 aa).

Belongs to the UPF0597 family.

The protein is UPF0597 protein AHA_1619 of Aeromonas hydrophila subsp. hydrophila (strain ATCC 7966 / DSM 30187 / BCRC 13018 / CCUG 14551 / JCM 1027 / KCTC 2358 / NCIMB 9240 / NCTC 8049).